The chain runs to 290 residues: 2-dehydro-3-deoxyphosphooctonate aldolase 1 (290 aa).

Ala-2 carries the N-acetylalanine modification.

This sequence belongs to the KdsA family. In terms of tissue distribution, expressed in shoots.

It localises to the cytoplasm. It catalyses the reaction D-arabinose 5-phosphate + phosphoenolpyruvate + H2O = 3-deoxy-alpha-D-manno-2-octulosonate-8-phosphate + phosphate. Catalyzes the stereospecific condensation of D-arabinose 5-phosphate and phosphoenolpyruvate to form 3-deoxy-D-manno-octulosonate 8-phosphate (KDO-8-phosphate) and inorganic phosphate. Involved in the biosynthesis of 3-deoxy-D-manno-octulosonate (KDO) which is an indispensable component of rhamnogalacturonan II (RG-II), a structurally complex pectic polysaccharide of the primary cell wall. RG-II is essential for the cell wall integrity of rapidly growing tissues and pollen tube growth and elongation. This Arabidopsis thaliana (Mouse-ear cress) protein is 2-dehydro-3-deoxyphosphooctonate aldolase 1 (KDSA1).